The sequence spans 356 residues: Cyclin-D2-2 (356 aa).

A compositionally biased stretch (polar residues) spans 325–343 (LGSSQSNSNNKDYNSQDSA). Residues 325–356 (LGSSQSNSNNKDYNSQDSAPASKRRRLNTTPI) form a disordered region. Over residues 346–356 (SKRRRLNTTPI) the composition is skewed to basic residues.

This sequence belongs to the cyclin family. Cyclin D subfamily.

The polypeptide is Cyclin-D2-2 (CYCD2-2) (Oryza sativa subsp. japonica (Rice)).